We begin with the raw amino-acid sequence, 234 residues long: Arsenate respiratory reductase iron-sulfur subunit ArrB (234 aa).

4Fe-4S ferredoxin-type domains lie at 3–32, 48–79, and 80–109; these read LGMV…NDGI, VKYT…KDKR, and GLTL…FNAA. Positions 12, 15, 18, 22, 57, 60, 65, 69, 89, 92, 95, 99, 164, 167, 179, and 183 each coordinate [4Fe-4S] cluster.

Heterodimer composed of one large subunit (ArrA) and one small subunit (ArrB). The cofactor is [4Fe-4S] cluster.

Its subcellular location is the periplasm. With respect to regulation, phosphate is a competitive inhibitor. Component of the arsenate respiratory reductase (Arr) complex, which catalyzes the reduction of arsenate (As(V)) to arsenite (As(III)). ArrB is probably the electron transfer subunit. The periplasmic localization of this complex may allow the cell to couple arsenate reduction to energy production before arsenate can be transported to the cell cytoplasm and enter the ars detoxification pathway, an energy-requiring process. The protein is Arsenate respiratory reductase iron-sulfur subunit ArrB of Shewanella sp. (strain ANA-3).